Here is a 355-residue protein sequence, read N- to C-terminus: S-adenosylmethionine:tRNA ribosyltransferase-isomerase (355 aa).

This sequence belongs to the QueA family. In terms of assembly, monomer.

The protein resides in the cytoplasm. The catalysed reaction is 7-aminomethyl-7-carbaguanosine(34) in tRNA + S-adenosyl-L-methionine = epoxyqueuosine(34) in tRNA + adenine + L-methionine + 2 H(+). Its pathway is tRNA modification; tRNA-queuosine biosynthesis. In terms of biological role, transfers and isomerizes the ribose moiety from AdoMet to the 7-aminomethyl group of 7-deazaguanine (preQ1-tRNA) to give epoxyqueuosine (oQ-tRNA). The sequence is that of S-adenosylmethionine:tRNA ribosyltransferase-isomerase from Erwinia tasmaniensis (strain DSM 17950 / CFBP 7177 / CIP 109463 / NCPPB 4357 / Et1/99).